A 301-amino-acid chain; its full sequence is MALTIGVLGGGAWGSTLAGLLSQGGHRVQIWRREHGPQALQALAASEVLVGATALVGVSGMAQQIKGWSARPIVSCSKGLDPSSGQTASALWKAACPLWPVVVLSGPNLASELQQGLPAASVLAGHDEGLLSTLQQQLSTEQFRLYRNNDPLGTELAGALKNVMAVAAGICDGLQLGANARASLLTRALAEMATVLHGLGGRQDTLYGLAGIGDLLATATSPLSRNYRFGLCMADGLDRQQALEKVGATVEGVPTCEAIASLGRQKQWSLPITESVALLLQGALSPAQALQQLMQRELRCE.

Residues Trp13, Arg33, and Lys78 each contribute to the NADPH site. Residues Lys78 and Gly106 each contribute to the sn-glycerol 3-phosphate site. Ala110 lines the NADPH pocket. Sn-glycerol 3-phosphate contacts are provided by Lys161, Asp214, Ser224, Arg225, and Asn226. Catalysis depends on Lys161, which acts as the Proton acceptor. Arg225 contributes to the NADPH binding site. Position 251 (Glu251) interacts with NADPH.

The protein belongs to the NAD-dependent glycerol-3-phosphate dehydrogenase family.

It is found in the cytoplasm. It catalyses the reaction sn-glycerol 3-phosphate + NAD(+) = dihydroxyacetone phosphate + NADH + H(+). The catalysed reaction is sn-glycerol 3-phosphate + NADP(+) = dihydroxyacetone phosphate + NADPH + H(+). Its pathway is membrane lipid metabolism; glycerophospholipid metabolism. Functionally, catalyzes the reduction of the glycolytic intermediate dihydroxyacetone phosphate (DHAP) to sn-glycerol 3-phosphate (G3P), the key precursor for phospholipid synthesis. The protein is Glycerol-3-phosphate dehydrogenase [NAD(P)+] of Synechococcus sp. (strain RCC307).